The sequence spans 201 residues: ATP-dependent Clp protease proteolytic subunit (201 aa).

Serine 101 (nucleophile) is an active-site residue. Histidine 126 is a catalytic residue.

Belongs to the peptidase S14 family. In terms of assembly, component of the chloroplastic Clp protease core complex.

The protein localises to the plastid. It localises to the chloroplast stroma. The enzyme catalyses Hydrolysis of proteins to small peptides in the presence of ATP and magnesium. alpha-casein is the usual test substrate. In the absence of ATP, only oligopeptides shorter than five residues are hydrolyzed (such as succinyl-Leu-Tyr-|-NHMec, and Leu-Tyr-Leu-|-Tyr-Trp, in which cleavage of the -Tyr-|-Leu- and -Tyr-|-Trp bonds also occurs).. Cleaves peptides in various proteins in a process that requires ATP hydrolysis. Has a chymotrypsin-like activity. Plays a major role in the degradation of misfolded proteins. The sequence is that of ATP-dependent Clp protease proteolytic subunit from Chlorella vulgaris (Green alga).